The primary structure comprises 637 residues: Threonine--tRNA ligase (637 aa).

One can recognise a TGS domain in the interval 1–61 (MPNVKLPDGN…KEDCSLIIVT (61 aa)). Positions 242–533 (DHRKLGKALD…LIEHYAGKLP (292 aa)) are catalytic. Zn(2+) is bound by residues cysteine 333, histidine 384, and histidine 510.

Belongs to the class-II aminoacyl-tRNA synthetase family. In terms of assembly, homodimer. Zn(2+) is required as a cofactor.

The protein localises to the cytoplasm. The catalysed reaction is tRNA(Thr) + L-threonine + ATP = L-threonyl-tRNA(Thr) + AMP + diphosphate + H(+). In terms of biological role, catalyzes the attachment of threonine to tRNA(Thr) in a two-step reaction: L-threonine is first activated by ATP to form Thr-AMP and then transferred to the acceptor end of tRNA(Thr). Also edits incorrectly charged L-seryl-tRNA(Thr). This is Threonine--tRNA ligase from Legionella pneumophila (strain Corby).